Here is a 100-residue protein sequence, read N- to C-terminus: Urease subunit gamma (100 aa).

Belongs to the urease gamma subunit family. As to quaternary structure, heterotrimer of UreA (gamma), UreB (beta) and UreC (alpha) subunits. Three heterotrimers associate to form the active enzyme.

Its subcellular location is the cytoplasm. The enzyme catalyses urea + 2 H2O + H(+) = hydrogencarbonate + 2 NH4(+). It participates in nitrogen metabolism; urea degradation; CO(2) and NH(3) from urea (urease route): step 1/1. In Micrococcus luteus (strain ATCC 4698 / DSM 20030 / JCM 1464 / CCM 169 / CCUG 5858 / IAM 1056 / NBRC 3333 / NCIMB 9278 / NCTC 2665 / VKM Ac-2230) (Micrococcus lysodeikticus), this protein is Urease subunit gamma.